A 312-amino-acid polypeptide reads, in one-letter code: Aquaporin Lacbi1:391485 (312 aa).

At 1 to 50 (MDDKFDDDALPNSKTTPEDYGDKLAEYDYTNTFPNTWMRLREPFREYIAE) the chain is on the cytoplasmic side. A helical transmembrane segment spans residues 51–71 (FVGVAVLIIFGVGADCQVVLS). Over 72–89 (ANTGVAPSPKGDYLSLNC) the chain is Extracellular. Residues 90 to 110 (GWAIGTAMGVWISGGISGGHI) form a helical membrane-spanning segment. The NPA 1 motif lies at 111-113 (NPA). The Cytoplasmic portion of the chain corresponds to 111–128 (NPAVTLALMAWRGFPWWK). The chain crosses the membrane as a helical span at residues 129-149 (VPGFIFAQLLGGIVGAGLVYV). The Extracellular segment spans residues 150 to 183 (NYIHAIDIVEGGRHIRTLDTAGLFATYAADYMTN). A glycan (N-linked (GlcNAc...) asparagine) is linked at N183. The helical transmembrane segment at 184–204 (VSCFFSEFLATAVLIVVIHAM) threads the bilayer. Residues 205–213 (NDKRNAPPP) lie on the Cytoplasmic side of the membrane. A helical transmembrane segment spans residues 214 to 234 (AGLAPLVLFFLILGIGASLGM). At 235–267 (ETGYAINPARDLGPRMLTAMVGYGRQVFAFRNQ) the chain is on the extracellular side. The NPA 2 signature appears at 241–243 (NPA). A helical transmembrane segment spans residues 268 to 288 (YWIWCPVIAPFLGAQVGTIFY). Topologically, residues 289 to 312 (DLFFYKGQDNVFGRLGSHIHISPA) are cytoplasmic.

Belongs to the MIP/aquaporin (TC 1.A.8) family.

The protein localises to the membrane. The enzyme catalyses H2O(in) = H2O(out). It catalyses the reaction glycerol(in) = glycerol(out). It carries out the reaction NH4(+)(in) = NH4(+)(out). Functionally, water channel required to facilitate the transport of water across membranes. In addition to water, also shows strong glycerol and ammonium transport activities. May be involved in fungal nitrogen (ammonium) support of the plant host in symbiosis. Glycerol accumulation has never been observed in ectomycorrhizal (ECM) fungi, therefore, glycerol permeability of Lacbi1:391485 might be a relict of the affiliation of the protein to the group of aquaglyceroporins, and other osmotic active compounds (e.g. trehalose or mannitol) may have taken over glycerol function in ECM fungi. This Laccaria bicolor (strain S238N-H82 / ATCC MYA-4686) (Bicoloured deceiver) protein is Aquaporin Lacbi1:391485.